The sequence spans 1082 residues: DNA-directed RNA polymerase subunit beta (1082 aa).

This sequence belongs to the RNA polymerase beta chain family. In terms of assembly, in plastids the minimal PEP RNA polymerase catalytic core is composed of four subunits: alpha, beta, beta', and beta''. When a (nuclear-encoded) sigma factor is associated with the core the holoenzyme is formed, which can initiate transcription.

Its subcellular location is the plastid. It is found in the chloroplast. The enzyme catalyses RNA(n) + a ribonucleoside 5'-triphosphate = RNA(n+1) + diphosphate. DNA-dependent RNA polymerase catalyzes the transcription of DNA into RNA using the four ribonucleoside triphosphates as substrates. In Euglena gracilis, this protein is DNA-directed RNA polymerase subunit beta.